The primary structure comprises 512 residues: Alpha-amylase (512 aa).

An N-terminal signal peptide occupies residues 1-29 (MKQQKRLYARLLTLLFALIFLLPHSAAAA). Asn133, Asp190, Ala210, Asp212, Asp223, Asp229, Asp231, and Asp233 together coordinate Ca(2+). Asp190 contacts Na(+). Residues Asp212, Asp223, and Asp229 each contribute to the Na(+) site. The active-site Nucleophile is the Asp260. Residue His264 coordinates Ca(2+). Glu290 functions as the Proton donor in the catalytic mechanism. Ca(2+) contacts are provided by Gly329, Tyr331, His435, Asp436, and Asp459.

This sequence belongs to the glycosyl hydrolase 13 family. In terms of assembly, monomer. Requires Ca(2+) as cofactor. The cofactor is Na(+).

The protein resides in the secreted. The enzyme catalyses Endohydrolysis of (1-&gt;4)-alpha-D-glucosidic linkages in polysaccharides containing three or more (1-&gt;4)-alpha-linked D-glucose units.. The protein is Alpha-amylase (amyS) of Bacillus licheniformis.